The primary structure comprises 306 residues: Reticulocalbin-2 (306 aa).

Residues 1 to 22 (MESPTLLGLLLLLLGGPGTSLG) form the signal peptide. 6 consecutive EF-hand domains span residues 50–85 (EQQKRLKVIISRIDVDLDGFLTEAELSSWIQHSFKS), 86–121 (YIIEDAKQQFQHYDKDGDGRVSWEEYNIQMYDRVID), 144–173 (KKRFQKANKDGDSHLDFEEFAAFEHPEEAD), 175–210 (MKEFVIQESLEEHDKDGDGFVSLQEFLGDYRRDPAA), 226–251 (NDYDKDKDGKLSPKELLTWVMPNNEG), and 252–287 (LAQEEAVHLLDEMDLDGDRRLSANEILENQDLFLNS). Ca(2+)-binding residues include D99, D101, D103, R105, and E110. Positions 188, 190, 192, 199, 229, 231, 233, 235, 240, 265, 267, 269, 271, and 276 each coordinate Ca(2+).

This sequence belongs to the CREC family. As to quaternary structure, may bind phospholipase A2, since the rat reticulocalbin-2 has been isolated on the phospholipase complex taipoxin columns. As to expression, expressed by the venom gland.

It is found in the secreted. This is Reticulocalbin-2 from Crotalus adamanteus (Eastern diamondback rattlesnake).